The sequence spans 327 residues: NF-kappa-B inhibitor delta (327 aa).

The segment at 1–40 is disordered; the sequence is MEDSLDTRLYPEPSLSQVGSWRVSSLPSGSPQLPSPTGPS. The segment covering 14-23 has biased composition (polar residues); it reads SLSQVGSWRV. ANK repeat units lie at residues 62–97, 98–127, 131–160, 166–215, 220–250, and 257–290; these read EGDT…IREH, KGKT…EPNA, QGRS…QVDL, EGLT…SHTS, SNKT…DLRA, and HGNT…DPTL. Residues 293–327 form a disordered region; it reads LENEQPVHLLRPGPGPEGLRQLLKRSRTAPPGLSS.

It belongs to the NF-kappa-B inhibitor family. As to quaternary structure, interacts with NFKB1, RELA and RELB; in the nucleus. In terms of tissue distribution, specifically expressed in spleen and at low levels in thymus. Expressed in a population of antigen-presenting dendritic cells which may act as regulators of systemic inflammatory response.

It localises to the nucleus. Regulates the expression of IL-2, IL-6, and other cytokines through regulation on NF-kappa-B activity. Functions in the regulation of inflammatory responses. Involved in the induction of T helper 17 cells (Th17) differentiation upon recognition of antigen by T cell antigen receptor (TCR). According to PubMed:11931770, it may also regulate TCR-induced negative selection of thymocytes. The protein is NF-kappa-B inhibitor delta (Nfkbid) of Mus musculus (Mouse).